The following is a 255-amino-acid chain: Post-GPI attachment to proteins factor 2 (255 aa).

The next 6 membrane-spanning stretches (helical) occupy residues Leu-25–Phe-45, Leu-80–Tyr-100, Leu-111–Phe-131, Asn-143–Asn-163, Leu-185–Ala-205, and Ala-209–Phe-229.

This sequence belongs to the PGAP2 family.

It is found in the golgi apparatus membrane. It localises to the endoplasmic reticulum membrane. In terms of biological role, involved in the lipid remodeling steps of GPI-anchor maturation. Required for stable expression of GPI-anchored proteins at the cell surface. In Drosophila pseudoobscura pseudoobscura (Fruit fly), this protein is Post-GPI attachment to proteins factor 2.